A 279-amino-acid chain; its full sequence is 4-hydroxy-3-methylbut-2-enyl diphosphate reductase (279 aa).

Residue cysteine 12 coordinates [4Fe-4S] cluster. (2E)-4-hydroxy-3-methylbut-2-enyl diphosphate contacts are provided by histidine 42 and histidine 74. Dimethylallyl diphosphate is bound by residues histidine 42 and histidine 74. Isopentenyl diphosphate contacts are provided by histidine 42 and histidine 74. Cysteine 96 provides a ligand contact to [4Fe-4S] cluster. A (2E)-4-hydroxy-3-methylbut-2-enyl diphosphate-binding site is contributed by histidine 124. Histidine 124 lines the dimethylallyl diphosphate pocket. Isopentenyl diphosphate is bound at residue histidine 124. Residue glutamate 126 is the Proton donor of the active site. Threonine 162 is a binding site for (2E)-4-hydroxy-3-methylbut-2-enyl diphosphate. Cysteine 190 lines the [4Fe-4S] cluster pocket. (2E)-4-hydroxy-3-methylbut-2-enyl diphosphate is bound by residues serine 218, serine 219, asparagine 220, and serine 263. Residues serine 218, serine 219, asparagine 220, and serine 263 each coordinate dimethylallyl diphosphate. 4 residues coordinate isopentenyl diphosphate: serine 218, serine 219, asparagine 220, and serine 263.

Belongs to the IspH family. [4Fe-4S] cluster is required as a cofactor.

The catalysed reaction is isopentenyl diphosphate + 2 oxidized [2Fe-2S]-[ferredoxin] + H2O = (2E)-4-hydroxy-3-methylbut-2-enyl diphosphate + 2 reduced [2Fe-2S]-[ferredoxin] + 2 H(+). It carries out the reaction dimethylallyl diphosphate + 2 oxidized [2Fe-2S]-[ferredoxin] + H2O = (2E)-4-hydroxy-3-methylbut-2-enyl diphosphate + 2 reduced [2Fe-2S]-[ferredoxin] + 2 H(+). Its pathway is isoprenoid biosynthesis; dimethylallyl diphosphate biosynthesis; dimethylallyl diphosphate from (2E)-4-hydroxy-3-methylbutenyl diphosphate: step 1/1. The protein operates within isoprenoid biosynthesis; isopentenyl diphosphate biosynthesis via DXP pathway; isopentenyl diphosphate from 1-deoxy-D-xylulose 5-phosphate: step 6/6. In terms of biological role, catalyzes the conversion of 1-hydroxy-2-methyl-2-(E)-butenyl 4-diphosphate (HMBPP) into a mixture of isopentenyl diphosphate (IPP) and dimethylallyl diphosphate (DMAPP). Acts in the terminal step of the DOXP/MEP pathway for isoprenoid precursor biosynthesis. This chain is 4-hydroxy-3-methylbut-2-enyl diphosphate reductase, found in Alkaliphilus oremlandii (strain OhILAs) (Clostridium oremlandii (strain OhILAs)).